Reading from the N-terminus, the 430-residue chain is WD repeat-containing protein jip5 (430 aa).

6 WD repeats span residues 9–48, 72–111, 117–158, 215–262, 272–318, and 323–360; these read PLSS…AAAE, RHKG…VTSK, TNTD…SFKS, DQEE…DQSE, AGGE…GVVE, and DDIE…EEEE. A compositionally biased stretch (acidic residues) spans 356-374; it reads EEEEEEEEEEQEDIEDNDD. The tract at residues 356–430 is disordered; it reads EEEEEEEEEE…NGILKFKGME (75 aa). Positions 382–397 are enriched in basic and acidic residues; sequence HALERDSDDSDARADS. The span at 405–416 shows a compositional bias: basic residues; sequence RKKRKKKKKGKK.

It belongs to the WD repeat WDR55 family.

It localises to the nucleus. The protein resides in the nucleolus. This is WD repeat-containing protein jip5 (jip5) from Botryotinia fuckeliana (strain B05.10) (Noble rot fungus).